The following is a 527-amino-acid chain: Peptide chain release factor 3 (527 aa).

A tr-type G domain is found at D10–L278. GTP-binding positions include S19–T26, D87–H91, and N141–D144.

It belongs to the TRAFAC class translation factor GTPase superfamily. Classic translation factor GTPase family. PrfC subfamily.

The protein resides in the cytoplasm. In terms of biological role, increases the formation of ribosomal termination complexes and stimulates activities of RF-1 and RF-2. It binds guanine nucleotides and has strong preference for UGA stop codons. It may interact directly with the ribosome. The stimulation of RF-1 and RF-2 is significantly reduced by GTP and GDP, but not by GMP. In Geobacter metallireducens (strain ATCC 53774 / DSM 7210 / GS-15), this protein is Peptide chain release factor 3.